The chain runs to 100 residues: Urease subunit gamma (100 aa).

Belongs to the urease gamma subunit family. As to quaternary structure, heterotrimer of UreA (gamma), UreB (beta) and UreC (alpha) subunits. Three heterotrimers associate to form the active enzyme.

The protein resides in the cytoplasm. The catalysed reaction is urea + 2 H2O + H(+) = hydrogencarbonate + 2 NH4(+). It functions in the pathway nitrogen metabolism; urea degradation; CO(2) and NH(3) from urea (urease route): step 1/1. In Saccharophagus degradans (strain 2-40 / ATCC 43961 / DSM 17024), this protein is Urease subunit gamma.